The following is a 332-amino-acid chain: 2,3-diketo-L-gulonate reductase (332 aa).

Residue His-44 is the Proton donor of the active site. Residues Ile-168–Ser-174, Trp-224–Lys-225, and Gly-304–Glu-306 each bind NAD(+).

This sequence belongs to the LDH2/MDH2 oxidoreductase family. DlgD subfamily. In terms of assembly, homodimer.

Its subcellular location is the cytoplasm. It carries out the reaction 3-dehydro-L-gulonate + NAD(+) = 2,3-dioxo-L-gulonate + NADH + H(+). The enzyme catalyses 3-dehydro-L-gulonate + NADP(+) = 2,3-dioxo-L-gulonate + NADPH + H(+). Its function is as follows. Catalyzes the reduction of 2,3-diketo-L-gulonate in the presence of NADH, to form 3-keto-L-gulonate. The protein is 2,3-diketo-L-gulonate reductase of Escherichia coli O139:H28 (strain E24377A / ETEC).